Reading from the N-terminus, the 441-residue chain is MTVSTAIARLNAADPDFARHLDHLLSWESVSDDAVNQRVLDIIKAVRERGDAALVEFTQRFDGVDAKSIDDLILDRARLELALTRITPVQREALEKAANRVRIYHERQKQDSWQYTEADGTVLGQKVTPLDRAGLYVPGGKASYPSSVLMNAIPAKVAGVTEVVMVVPTPRGEVNELVLAAACIAGVDRVFTVGGAQAVAALAYGTESVPQVDKIVGPGNIYVATAKRHVFGQVGIDMIAGPSEILVVCDGQTDPDWIAMDLFSQAEHDEDAQAILVSPDAAFLDRVAASIDKLMPTMERADIIEKSINGRGALIQVRDMQQAMDVANRIAPEHLELSVADPQAWLPHIRHAGAIFMGRHTSEALGDYCAGPNHVLPTSGTARFSSPLGVYDFQKRSSIIFCSEQGASELGHTASVLARGESLTAHARSAEYRILTQEKGN.

Residues Tyr-136, Gln-197, and Asn-220 each coordinate NAD(+). The substrate site is built by Ser-243, Gln-265, and His-268. Positions 265 and 268 each coordinate Zn(2+). Residues Glu-333 and His-334 each act as proton acceptor in the active site. The substrate site is built by His-334, Asp-367, Glu-421, and His-426. Residue Asp-367 participates in Zn(2+) binding. Residue His-426 coordinates Zn(2+).

Belongs to the histidinol dehydrogenase family. It depends on Zn(2+) as a cofactor.

The catalysed reaction is L-histidinol + 2 NAD(+) + H2O = L-histidine + 2 NADH + 3 H(+). Its pathway is amino-acid biosynthesis; L-histidine biosynthesis; L-histidine from 5-phospho-alpha-D-ribose 1-diphosphate: step 9/9. In terms of biological role, catalyzes the sequential NAD-dependent oxidations of L-histidinol to L-histidinaldehyde and then to L-histidine. The polypeptide is Histidinol dehydrogenase (Pseudomonas putida (strain ATCC 47054 / DSM 6125 / CFBP 8728 / NCIMB 11950 / KT2440)).